We begin with the raw amino-acid sequence, 130 residues long: Small ribosomal subunit protein uS9 (130 aa).

The protein belongs to the universal ribosomal protein uS9 family.

The chain is Small ribosomal subunit protein uS9 from Pseudoalteromonas atlantica (strain T6c / ATCC BAA-1087).